The following is a 126-amino-acid chain: Chorion class B protein M1768 (126 aa).

Positions 1–17 are left arm; that stretch reads YGGLGYGGLGGGCGRGF. The segment at 18–86 is central domain; that stretch reads SGGGLPVATA…GNGAVGITRE (69 aa). Positions 87 to 126 are right arm (Gly-rich tandem repeats); the sequence is GGFGYGAGYGDGYGLGFGGYGGGYGLGYGGYGGCGCSWGY.

Belongs to the chorion protein family.

This protein is one of many from the eggshell of the silk moth. In Bombyx mori (Silk moth), this protein is Chorion class B protein M1768.